Here is a 148-residue protein sequence, read N- to C-terminus: Large ribosomal subunit protein uL15 (148 aa).

The interval 1 to 47 is disordered; sequence MAFSLENLRPAPGSRPKSKRVGRGSSSGKGKTSSRGHKGQGRGTGKV.

This sequence belongs to the universal ribosomal protein uL15 family. As to quaternary structure, part of the 50S ribosomal subunit.

In terms of biological role, binds to the 23S rRNA. The polypeptide is Large ribosomal subunit protein uL15 (Kosmotoga olearia (strain ATCC BAA-1733 / DSM 21960 / TBF 19.5.1)).